Here is a 584-residue protein sequence, read N- to C-terminus: BEL1-like homeodomain protein 8 (584 aa).

An SR/KY domain region spans residues 266–282 (SRFLEPAQKMLEEFCIS). The disordered stretch occupies residues 292-317 (ESTSMEDDDDDDDNLSGFSSSSEPLE). Positions 295-305 (SMEDDDDDDDN) are enriched in acidic residues. The BELL domain stretch occupies residues 316–387 (LEPKNRLKKA…ALRTAIAEHV (72 aa)). Positions 424–486 (IWRPQRGLPE…NARVRLWKPM (63 aa)) form a DNA-binding region, homeobox. The disordered stretch occupies residues 503 to 529 (TSHNIEPSNRPNTVSSPSHEQTLTGLS).

It belongs to the TALE/BELL homeobox family. As to quaternary structure, may form heterodimeric complex with the TALE/KNOX proteins STM and KNAT1/BP.

The protein resides in the nucleus. Functionally, required for specifying floral primordia and establishing early internode patterning events during inflorescence development. The sequence is that of BEL1-like homeodomain protein 8 (BLH8) from Arabidopsis thaliana (Mouse-ear cress).